An 800-amino-acid polypeptide reads, in one-letter code: Serine/threonine-protein kinase KIN4 (800 aa).

In terms of domain architecture, Protein kinase spans tyrosine 46 to leucine 313. ATP-binding positions include leucine 52 to valine 60 and lysine 80. The active-site Proton acceptor is aspartate 175. Disordered regions lie at residues leucine 331 to valine 397 and serine 438 to threonine 487. The segment covering serine 348–serine 358 has biased composition (low complexity). Residues serine 365 and serine 388 each carry the phosphoserine modification. Polar residues-rich tracts occupy residues glutamine 380–serine 395 and glycine 459–lysine 473. Residue serine 521 is modified to Phosphoserine. Disordered regions lie at residues glutamate 629 to serine 661 and serine 678 to serine 754. Residues serine 678–asparagine 721 show a composition bias toward polar residues. Residues proline 727–aspartate 740 show a composition bias toward basic and acidic residues. Residue serine 748 is modified to Phosphoserine.

Belongs to the protein kinase superfamily. Ser/Thr protein kinase family.

The catalysed reaction is L-seryl-[protein] + ATP = O-phospho-L-seryl-[protein] + ADP + H(+). It catalyses the reaction L-threonyl-[protein] + ATP = O-phospho-L-threonyl-[protein] + ADP + H(+). In terms of biological role, this protein is probably a serine/threonine protein kinase. This Saccharomyces cerevisiae (strain ATCC 204508 / S288c) (Baker's yeast) protein is Serine/threonine-protein kinase KIN4 (KIN4).